Reading from the N-terminus, the 154-residue chain is MATFSQKPAEVVKKWVLIDAEGLVVGRLASLVANRLRGKHKATFTPHVDDGDNVIIINADKVVLTGKKYTDKKYYWHTGHPGGIKERTARQILEGRFPERVLEKAIERMIPRGPLGRRQMKNLRVNAGPNHQHEAQQPEVLDVAALNRKNKGNA.

Belongs to the universal ribosomal protein uL13 family. In terms of assembly, part of the 50S ribosomal subunit.

In terms of biological role, this protein is one of the early assembly proteins of the 50S ribosomal subunit, although it is not seen to bind rRNA by itself. It is important during the early stages of 50S assembly. The polypeptide is Large ribosomal subunit protein uL13 (Brucella abortus (strain S19)).